We begin with the raw amino-acid sequence, 335 residues long: Tetraacyldisaccharide 4'-kinase (335 aa).

Position 58 to 65 (58 to 65 (TVGGNGKT)) interacts with ATP.

Belongs to the LpxK family.

The enzyme catalyses a lipid A disaccharide + ATP = a lipid IVA + ADP + H(+). Its pathway is glycolipid biosynthesis; lipid IV(A) biosynthesis; lipid IV(A) from (3R)-3-hydroxytetradecanoyl-[acyl-carrier-protein] and UDP-N-acetyl-alpha-D-glucosamine: step 6/6. In terms of biological role, transfers the gamma-phosphate of ATP to the 4'-position of a tetraacyldisaccharide 1-phosphate intermediate (termed DS-1-P) to form tetraacyldisaccharide 1,4'-bis-phosphate (lipid IVA). The chain is Tetraacyldisaccharide 4'-kinase from Dichelobacter nodosus (strain VCS1703A).